Consider the following 476-residue polypeptide: Adenosylhomocysteinase (476 aa).

The substrate site is built by threonine 61, aspartate 140, and glutamate 200. 201 to 203 (TTT) is a binding site for NAD(+). Residues lysine 230 and aspartate 234 each contribute to the substrate site. NAD(+)-binding positions include asparagine 235, 264–269 (GYGDVG), glutamate 287, asparagine 322, 343–345 (IGH), and asparagine 389.

The protein belongs to the adenosylhomocysteinase family. The cofactor is NAD(+).

The protein resides in the cytoplasm. The catalysed reaction is S-adenosyl-L-homocysteine + H2O = L-homocysteine + adenosine. It participates in amino-acid biosynthesis; L-homocysteine biosynthesis; L-homocysteine from S-adenosyl-L-homocysteine: step 1/1. May play a key role in the regulation of the intracellular concentration of adenosylhomocysteine. This chain is Adenosylhomocysteinase, found in Acidovorax ebreus (strain TPSY) (Diaphorobacter sp. (strain TPSY)).